A 479-amino-acid chain; its full sequence is Rifampicin monooxygenase (479 aa).

Residues T12, D31, K32, R41, Q98, V122, T156, D278, L291, and N292 each contribute to the FAD site.

Belongs to the rifampicin monooxygenase family. It depends on FAD as a cofactor.

The enzyme catalyses rifampicin + NADPH + O2 = rifampicin para-naphthoquinone carboxamide + NADP(+) + H2O + H(+). The catalysed reaction is rifampicin + NADH + O2 = rifampicin para-naphthoquinone carboxamide + NAD(+) + H2O + H(+). In terms of biological role, monooxygenase that can modify rifampicin, thereby inactivating its antibiotic activity. The chain is Rifampicin monooxygenase from Rhodococcus hoagii (Corynebacterium equii).